Reading from the N-terminus, the 498-residue chain is Glycerol kinase (498 aa).

Threonine 12 provides a ligand contact to ADP. Residues threonine 12, threonine 13, and serine 14 each contribute to the ATP site. Threonine 12 serves as a coordination point for sn-glycerol 3-phosphate. Residue arginine 16 participates in ADP binding. Positions 82, 83, and 134 each coordinate sn-glycerol 3-phosphate. Glycerol is bound by residues arginine 82, glutamate 83, and tyrosine 134. Phosphohistidine; by HPr is present on histidine 230. Aspartate 244 lines the sn-glycerol 3-phosphate pocket. Aspartate 244 and glutamine 245 together coordinate glycerol. The ADP site is built by threonine 266 and glycine 309. Threonine 266, glycine 309, glutamine 313, and glycine 410 together coordinate ATP. The ADP site is built by glycine 410 and asparagine 414.

The protein belongs to the FGGY kinase family. Homotetramer and homodimer (in equilibrium). The phosphoenolpyruvate-dependent sugar phosphotransferase system (PTS), including enzyme I, and histidine-containing protein (HPr) are required for the phosphorylation, which leads to the activation of the enzyme.

The catalysed reaction is glycerol + ATP = sn-glycerol 3-phosphate + ADP + H(+). It participates in polyol metabolism; glycerol degradation via glycerol kinase pathway; sn-glycerol 3-phosphate from glycerol: step 1/1. Activated by phosphorylation and inhibited by fructose 1,6-bisphosphate (FBP). Its function is as follows. Key enzyme in the regulation of glycerol uptake and metabolism. Catalyzes the phosphorylation of glycerol to yield sn-glycerol 3-phosphate. In Staphylococcus aureus (strain MSSA476), this protein is Glycerol kinase.